Consider the following 146-residue polypeptide: Acireductone dioxygenase (146 aa).

Fe(2+) is bound by residues His-71, His-73, Glu-77, and His-116. The Ni(2+) site is built by His-71, His-73, Glu-77, and His-116.

The protein belongs to the acireductone dioxygenase (ARD) family. Fe(2+) is required as a cofactor. It depends on Ni(2+) as a cofactor.

The protein resides in the cytoplasm. It localises to the nucleus. The enzyme catalyses 1,2-dihydroxy-5-(methylsulfanyl)pent-1-en-3-one + O2 = 4-methylsulfanyl-2-oxobutanoate + formate + 2 H(+). It carries out the reaction 1,2-dihydroxy-5-(methylsulfanyl)pent-1-en-3-one + O2 = 3-(methylsulfanyl)propanoate + CO + formate + 2 H(+). Its pathway is amino-acid biosynthesis; L-methionine biosynthesis via salvage pathway; L-methionine from S-methyl-5-thio-alpha-D-ribose 1-phosphate: step 5/6. Catalyzes 2 different reactions between oxygen and the acireductone 1,2-dihydroxy-3-keto-5-methylthiopentene (DHK-MTPene) depending upon the metal bound in the active site. Fe-containing acireductone dioxygenase (Fe-ARD) produces formate and 2-keto-4-methylthiobutyrate (KMTB), the alpha-ketoacid precursor of methionine in the methionine recycle pathway. Ni-containing acireductone dioxygenase (Ni-ARD) produces methylthiopropionate, carbon monoxide and formate, and does not lie on the methionine recycle pathway. The chain is Acireductone dioxygenase from Heterostelium pallidum (strain ATCC 26659 / Pp 5 / PN500) (Cellular slime mold).